The following is a 597-amino-acid chain: Elongation factor 4 (597 aa).

In terms of domain architecture, tr-type G spans Lys2–Thr184. GTP is bound by residues Asp14–Thr19 and Asn131–Asp134.

The protein belongs to the TRAFAC class translation factor GTPase superfamily. Classic translation factor GTPase family. LepA subfamily.

The protein resides in the cell inner membrane. The catalysed reaction is GTP + H2O = GDP + phosphate + H(+). Functionally, required for accurate and efficient protein synthesis under certain stress conditions. May act as a fidelity factor of the translation reaction, by catalyzing a one-codon backward translocation of tRNAs on improperly translocated ribosomes. Back-translocation proceeds from a post-translocation (POST) complex to a pre-translocation (PRE) complex, thus giving elongation factor G a second chance to translocate the tRNAs correctly. Binds to ribosomes in a GTP-dependent manner. The chain is Elongation factor 4 from Neisseria gonorrhoeae (strain ATCC 700825 / FA 1090).